Consider the following 157-residue polypeptide: MNGNSTNNEQLQQELATTQDQVASIIESFVELGVSIYDFPGTPEATKGMITNLQRNVDRLYKLNVRSNDPQSSLSKVDIPLEVVQYIEDGRNPDIYTREFVEAIRRSNQYQRGKMHGLKQLRDSLADKIVDEFPELKEPVEDIIKRTSPIDNVSNTH.

The protein belongs to the Mediator complex subunit 10 family. Component of the Mediator complex, which is composed of at least 21 subunits that form three structurally distinct submodules. The Mediator head module contains MED6, MED8, MED11, SRB4/MED17, SRB5/MED18, ROX3/MED19, SRB2/MED20 and SRB6/MED22, the middle module contains MED1, MED4, NUT1/MED5, MED7, CSE2/MED9, NUT2/MED10, SRB7/MED21 and SOH1/MED31, and the tail module contains MED2, PGD1/MED3, RGR1/MED14, GAL11/MED15 and SIN4/MED16. The head and the middle modules interact directly with RNA polymerase II, whereas the elongated tail module interacts with gene-specific regulatory proteins. NUT2/MED10 interacts directly with SRB7/MED21.

Its subcellular location is the nucleus. Functionally, component of the Mediator complex, a coactivator involved in the regulated transcription of nearly all RNA polymerase II-dependent genes. Mediator functions as a bridge to convey information from gene-specific regulatory proteins to the basal RNA polymerase II transcription machinery. The Mediator complex, having a compact conformation in its free form, is recruited to promoters by direct interactions with regulatory proteins and serves for the assembly of a functional preinitiation complex with RNA polymerase II and the general transcription factors. The Mediator complex unfolds to an extended conformation and partially surrounds RNA polymerase II, specifically interacting with the unphosphorylated form of the C-terminal domain (CTD) of RNA polymerase II. The Mediator complex dissociates from the RNA polymerase II holoenzyme and stays at the promoter when transcriptional elongation begins. The sequence is that of Mediator of RNA polymerase II transcription subunit 10 (NUT2) from Saccharomyces cerevisiae (strain ATCC 204508 / S288c) (Baker's yeast).